Here is a 118-residue protein sequence, read N- to C-terminus: Ribonuclease P protein component (118 aa).

This sequence belongs to the RnpA family. In terms of assembly, consists of a catalytic RNA component (M1 or rnpB) and a protein subunit.

The enzyme catalyses Endonucleolytic cleavage of RNA, removing 5'-extranucleotides from tRNA precursor.. Functionally, RNaseP catalyzes the removal of the 5'-leader sequence from pre-tRNA to produce the mature 5'-terminus. It can also cleave other RNA substrates such as 4.5S RNA. The protein component plays an auxiliary but essential role in vivo by binding to the 5'-leader sequence and broadening the substrate specificity of the ribozyme. This chain is Ribonuclease P protein component, found in Rickettsia peacockii (strain Rustic).